A 288-amino-acid chain; its full sequence is Small ribosomal subunit protein uS2 (288 aa).

The protein belongs to the universal ribosomal protein uS2 family. As to quaternary structure, component of the small ribosomal subunit. Mature ribosomes consist of a small (40S) and a large (60S) subunit. The 40S subunit contains about 33 different proteins and 1 molecule of RNA (18S). The 60S subunit contains about 49 different proteins and 3 molecules of RNA (28S, 5.8S and 5S). Interacts with ribosomal protein S21.

It is found in the cytoplasm. Functionally, required for the assembly and/or stability of the 40S ribosomal subunit. Required for the processing of the 20S rRNA-precursor to mature 18S rRNA in a late step of the maturation of 40S ribosomal subunits. This is Small ribosomal subunit protein uS2 from Aedes aegypti (Yellowfever mosquito).